The primary structure comprises 76 residues: Large ribosomal subunit protein bL31 (76 aa).

The protein belongs to the bacterial ribosomal protein bL31 family. Type A subfamily. Part of the 50S ribosomal subunit.

Binds the 23S rRNA. The sequence is that of Large ribosomal subunit protein bL31 from Picosynechococcus sp. (strain ATCC 27264 / PCC 7002 / PR-6) (Agmenellum quadruplicatum).